An 84-amino-acid chain; its full sequence is Cytochrome b559 subunit alpha (84 aa).

A helical transmembrane segment spans residues 22–36 (IIHIPAITILFASGF). Position 24 (histidine 24) interacts with heme.

It belongs to the PsbE/PsbF family. As to quaternary structure, heterodimer of an alpha subunit and a beta subunit. PSII is composed of 1 copy each of membrane proteins PsbA, PsbB, PsbC, PsbD, PsbE, PsbF, PsbH, PsbI, PsbJ, PsbK, PsbL, PsbM, PsbT, PsbX, Psb30/Ycf12, peripheral proteins PsbO, CyanoQ (PsbQ), PsbU, PsbV and a large number of cofactors. It forms dimeric complexes. It depends on heme b as a cofactor.

The protein localises to the cell inner membrane. Its function is as follows. This b-type cytochrome is tightly associated with the reaction center of photosystem II (PSII). PSII is a light-driven water:plastoquinone oxidoreductase that uses light energy to abstract electrons from H(2)O, generating O(2) and a proton gradient subsequently used for ATP formation. It consists of a core antenna complex that captures photons, and an electron transfer chain that converts photonic excitation into a charge separation. The sequence is that of Cytochrome b559 subunit alpha from Gloeobacter violaceus (strain ATCC 29082 / PCC 7421).